The sequence spans 295 residues: Protoheme IX farnesyltransferase (295 aa).

The next 9 membrane-spanning stretches (helical) occupy residues 27 to 47, 48 to 68, 93 to 115, 119 to 136, 147 to 167, 175 to 195, 219 to 239, 247 to 267, and 275 to 295; these read IMYL…GNIH, PFIG…AGAI, IARS…VMMI, YLSG…SLVY, NIVI…TSVT, LILF…LSLL, IYIL…GIFL, TCAI…FVSI, and MFTY…ISSF.

Belongs to the UbiA prenyltransferase family. Protoheme IX farnesyltransferase subfamily.

The protein localises to the cell inner membrane. The catalysed reaction is heme b + (2E,6E)-farnesyl diphosphate + H2O = Fe(II)-heme o + diphosphate. The protein operates within porphyrin-containing compound metabolism; heme O biosynthesis; heme O from protoheme: step 1/1. Converts heme B (protoheme IX) to heme O by substitution of the vinyl group on carbon 2 of heme B porphyrin ring with a hydroxyethyl farnesyl side group. This Ehrlichia chaffeensis (strain ATCC CRL-10679 / Arkansas) protein is Protoheme IX farnesyltransferase.